Reading from the N-terminus, the 439-residue chain is ATP-dependent RNA helicase RhlB (439 aa).

The short motif at 9 to 37 (QKFADLPLHPEVKQALAENGFEFCTPIQA) is the Q motif element. Positions 40–219 (LPVLLQSKDI…YDHMNDPVKV (180 aa)) constitute a Helicase ATP-binding domain. 53–60 (AQTGTGKT) contacts ATP. Positions 165 to 168 (DEAD) match the DEAD box motif. The 148-residue stretch at 243–390 (KMRLLLTLIE…VSNYDSSALL (148 aa)) folds into the Helicase C-terminal domain. The segment at 398 to 439 (KIPRKHPAGTRNLRERAGAGRPQGAHRSGGRPPRHDRTRRHS) is disordered. Residues 425–439 (SGGRPPRHDRTRRHS) show a composition bias toward basic residues.

The protein belongs to the DEAD box helicase family. RhlB subfamily. In terms of assembly, component of the RNA degradosome, which is a multiprotein complex involved in RNA processing and mRNA degradation.

Its subcellular location is the cytoplasm. The catalysed reaction is ATP + H2O = ADP + phosphate + H(+). Its function is as follows. DEAD-box RNA helicase involved in RNA degradation. Has RNA-dependent ATPase activity and unwinds double-stranded RNA. In Shewanella putrefaciens (strain CN-32 / ATCC BAA-453), this protein is ATP-dependent RNA helicase RhlB.